Reading from the N-terminus, the 782-residue chain is Semaphorin-3G (782 aa).

A signal peptide spans 1–22 (MAPSAWAICWLLGGLLLHGGSS). The 488-residue stretch at 32–519 (RLRLSYRDLL…SRLGVAQLRL (488 aa)) folds into the Sema domain. Asn44 is a glycosylation site (N-linked (GlcNAc...) asparagine). A disulfide bond links Cys105 and Cys116. Asn127 carries N-linked (GlcNAc...) asparagine glycosylation. 5 disulfide bridges follow: Cys134–Cys143, Cys270–Cys382, Cys294–Cys342, Cys522–Cys540, and Cys603–Cys655. The Ig-like C2-type domain maps to 569 to 671 (PALQCLGQSQ…FSQTVVRLAL (103 aa)).

Belongs to the semaphorin family.

Its subcellular location is the secreted. Has chemorepulsive activities for sympathetic axons. Ligand of NRP2. This Homo sapiens (Human) protein is Semaphorin-3G (SEMA3G).